A 414-amino-acid polypeptide reads, in one-letter code: Putative competence-damage inducible protein (414 aa).

It belongs to the CinA family.

The chain is Putative competence-damage inducible protein from Listeria monocytogenes serotype 4a (strain HCC23).